A 155-amino-acid polypeptide reads, in one-letter code: Small ribosomal subunit protein uS7cz/uS7cy (155 aa).

This sequence belongs to the universal ribosomal protein uS7 family. As to quaternary structure, part of the 30S ribosomal subunit.

The protein resides in the plastid. The protein localises to the chloroplast. One of the primary rRNA binding proteins, it binds directly to 16S rRNA where it nucleates assembly of the head domain of the 30S subunit. This is Small ribosomal subunit protein uS7cz/uS7cy (rps7-A) from Cucumis sativus (Cucumber).